Here is a 384-residue protein sequence, read N- to C-terminus: Terpene cyclase ascI (384 aa).

The signal sequence occupies residues 1–25 (MPQLAGKLILAGLIPLGAWVLHGFA). Residues 82–102 (LSLHAFMFAGQGVPLLVLNML) form a helical membrane-spanning segment. N-linked (GlcNAc...) asparagine glycosylation occurs at Asn-109. 4 helical membrane-spanning segments follow: residues 119-139 (VFGILYMVVGLAIMAPLYLFL), 164-184 (AVGFGVFVGYVLPTIFMSLPH), 194-214 (VLSVVFWQAVPLWASVCAYFA), and 235-255 (GAVYAASLIIATATHVATFAI). N-linked (GlcNAc...) asparagine glycosylation is present at Asn-258. Helical transmembrane passes span 291-311 (WFLQWDYTMMSLAYMVWAIGI) and 330-350 (IALRSMAKLLVMGPIGAALSL). N-linked (GlcNAc...) asparagine glycosylation occurs at Asn-372.

It belongs to the membrane-bound ascI terpene cyclase family.

It is found in the membrane. It carries out the reaction 16-hydroxy-ilicicolin A epoxide = ascofuranol. The protein operates within secondary metabolite biosynthesis; terpenoid biosynthesis. Functionally, epoxide hydrolase; part of the asc-2 gene cluster that mediates the biosynthesis of ascofuranone, a strong inhibitor of cyanide-insensitive alternative oxidases and a promising drug candidate against African trypanosomiasis. The first step in the pathway is performed by the non-reducing polyketide synthase ascC that produces orsellinic acid by condensing acetyl-CoA with 3 malonyl-CoA units. Orsellinic acid is then prenylated by the prenyltransferase ascA to yield ilicicolinic acid B. Ilicicolinic acid B is further reduced to ilicicolin B by the reductase ascB. The halogenase ascD then chlorinates ilicicolin B to produce ilicicolin A which is converted to ilicicolin A epoxide by the cytochrome P450 monooxygenase ascE that catalyzes stereoselective epoxidation of the terminal double bond of the prenyl group. Ilicicolin A epoxide is the last common precursor for the biosynthesis of ascofuranone and ascochlorin. The terpene cyclase ascF produces a monocyclic terpene, and the cyclization reaction is proposed to be initiated by protonation of the terminal epoxide of ilicicolin A epoxide to generate a monocyclic tertiarycation, which is followed by a series of hydride and methyl shifts with abstraction of proton, leading to the formation of the (14S,15R,19R)-trimethylcyclohexanone ring structure of ilicicolin C, which is finally reduced to ascochlorin by the dehydrogenase ascG. On the other hand, ilicicolin A epoxide is hydroxylated by the cytochrome P450 monooxygenase ascH, and the resultant product is cyclized by the terpene cyclase ascI to ascofuranol via protonation-initiated epoxide ring opening, which facilitates the 6-endo-tet cyclization to form the tetrahy-drofuran ring. Finally, ascofuranol is oxidized into ascofuranone by ascJ. This chain is Terpene cyclase ascI, found in Acremonium egyptiacum (Oospora egyptiaca).